The primary structure comprises 342 residues: Phosphoribosylformylglycinamidine cyclo-ligase (342 aa).

The protein belongs to the AIR synthase family.

The protein localises to the cytoplasm. The enzyme catalyses 2-formamido-N(1)-(5-O-phospho-beta-D-ribosyl)acetamidine + ATP = 5-amino-1-(5-phospho-beta-D-ribosyl)imidazole + ADP + phosphate + H(+). The protein operates within purine metabolism; IMP biosynthesis via de novo pathway; 5-amino-1-(5-phospho-D-ribosyl)imidazole from N(2)-formyl-N(1)-(5-phospho-D-ribosyl)glycinamide: step 2/2. This Gloeothece citriformis (strain PCC 7424) (Cyanothece sp. (strain PCC 7424)) protein is Phosphoribosylformylglycinamidine cyclo-ligase.